The primary structure comprises 160 residues: Ubiquitin-conjugating enzyme E2 16 (160 aa).

The UBC core domain occupies 3–153; sequence SSIKRLHKEY…VRCTTYLYAK (151 aa). Cys-90 (glycyl thioester intermediate) is an active-site residue.

Belongs to the ubiquitin-conjugating enzyme family.

It carries out the reaction S-ubiquitinyl-[E1 ubiquitin-activating enzyme]-L-cysteine + [E2 ubiquitin-conjugating enzyme]-L-cysteine = [E1 ubiquitin-activating enzyme]-L-cysteine + S-ubiquitinyl-[E2 ubiquitin-conjugating enzyme]-L-cysteine.. The protein operates within protein modification; protein ubiquitination. In terms of biological role, catalyzes the covalent attachment of ubiquitin to other proteins. This Schizosaccharomyces pombe (strain 972 / ATCC 24843) (Fission yeast) protein is Ubiquitin-conjugating enzyme E2 16 (ubc16).